Here is a 175-residue protein sequence, read N- to C-terminus: NADH-ubiquinone oxidoreductase chain 6 (175 aa).

5 helical membrane passes run 1–21 (MMTY…VGFS), 25–45 (SPIY…GIVM), 47–67 (FGGS…MLVV), 88–108 (VVMG…LCVL), and 149–169 (YGVW…IVVL).

It belongs to the complex I subunit 6 family.

The protein localises to the mitochondrion membrane. It carries out the reaction a ubiquinone + NADH + 5 H(+)(in) = a ubiquinol + NAD(+) + 4 H(+)(out). Functionally, core subunit of the mitochondrial membrane respiratory chain NADH dehydrogenase (Complex I) that is believed to belong to the minimal assembly required for catalysis. Complex I functions in the transfer of electrons from NADH to the respiratory chain. The immediate electron acceptor for the enzyme is believed to be ubiquinone. This is NADH-ubiquinone oxidoreductase chain 6 (MT-ND6) from Rhinolophus monoceros (Formosan lesser horseshoe bat).